The following is a 341-amino-acid chain: Ferrochelatase (341 aa).

Residues His-189 and Glu-293 each coordinate Fe cation.

This sequence belongs to the ferrochelatase family.

The protein resides in the cytoplasm. The enzyme catalyses heme b + 2 H(+) = protoporphyrin IX + Fe(2+). It participates in porphyrin-containing compound metabolism; protoheme biosynthesis; protoheme from protoporphyrin-IX: step 1/1. Functionally, catalyzes the ferrous insertion into protoporphyrin IX. The protein is Ferrochelatase of Pseudomonas fluorescens (strain Pf0-1).